Consider the following 105-residue polypeptide: Large ribosomal subunit protein eL36 (105 aa).

Belongs to the eukaryotic ribosomal protein eL36 family. In terms of assembly, component of the large ribosomal subunit.

It is found in the cytoplasm. It localises to the cytosol. Functionally, component of the large ribosomal subunit. The ribosome is a large ribonucleoprotein complex responsible for the synthesis of proteins in the cell. This chain is Large ribosomal subunit protein eL36 (rpl36), found in Xenopus laevis (African clawed frog).